Reading from the N-terminus, the 495-residue chain is UDP-N-acetylmuramoyl-L-alanyl-D-glutamate--2,6-diaminopimelate ligase (495 aa).

Positions 32 and 34 each coordinate UDP-N-acetyl-alpha-D-muramoyl-L-alanyl-D-glutamate. Position 119 to 125 (119 to 125) interacts with ATP; the sequence is GTNGKTT. UDP-N-acetyl-alpha-D-muramoyl-L-alanyl-D-glutamate is bound by residues asparagine 160, 161-162, serine 188, glutamine 194, and arginine 196; that span reads TT. Lysine 228 is modified (N6-carboxylysine). Meso-2,6-diaminopimelate is bound by residues arginine 390, 414 to 417, glycine 465, and glutamate 469; that span reads DNPR. A Meso-diaminopimelate recognition motif motif is present at residues 414–417; the sequence is DNPR.

This sequence belongs to the MurCDEF family. MurE subfamily. Mg(2+) serves as cofactor. Carboxylation is probably crucial for Mg(2+) binding and, consequently, for the gamma-phosphate positioning of ATP.

It localises to the cytoplasm. The enzyme catalyses UDP-N-acetyl-alpha-D-muramoyl-L-alanyl-D-glutamate + meso-2,6-diaminopimelate + ATP = UDP-N-acetyl-alpha-D-muramoyl-L-alanyl-gamma-D-glutamyl-meso-2,6-diaminopimelate + ADP + phosphate + H(+). It functions in the pathway cell wall biogenesis; peptidoglycan biosynthesis. Catalyzes the addition of meso-diaminopimelic acid to the nucleotide precursor UDP-N-acetylmuramoyl-L-alanyl-D-glutamate (UMAG) in the biosynthesis of bacterial cell-wall peptidoglycan. In Vibrio cholerae serotype O1 (strain ATCC 39315 / El Tor Inaba N16961), this protein is UDP-N-acetylmuramoyl-L-alanyl-D-glutamate--2,6-diaminopimelate ligase.